Here is a 314-residue protein sequence, read N- to C-terminus: Probable 5-dehydro-4-deoxyglucarate dehydratase (314 aa).

Belongs to the DapA family.

It carries out the reaction 5-dehydro-4-deoxy-D-glucarate + H(+) = 2,5-dioxopentanoate + CO2 + H2O. It participates in carbohydrate acid metabolism; D-glucarate degradation; 2,5-dioxopentanoate from D-glucarate: step 2/2. The polypeptide is Probable 5-dehydro-4-deoxyglucarate dehydratase (Bradyrhizobium diazoefficiens (strain JCM 10833 / BCRC 13528 / IAM 13628 / NBRC 14792 / USDA 110)).